The primary structure comprises 305 residues: MNLTKTQRQLHNFLTLAQEAGSLSKLAKLCGYRTPVALYKLKQRLEKQAEDPDARGIRPSLMAKLEKHTGKPKGWLDRKHRERTVPETAAESTGTAETQIAETASAAGCRSVTVNRNTCETQITVSINLDGSGKSRLDTGVPFLEHMIDQIARHGMIDIDISCKGDLHIDDHHTAEDIGITLGQAIRQALGDKKGIRRYGHSYVPLDEALSRVVIDLSGRPGLVYNIEFTRALIGRFDVDLFEEFFHGIVNHSMMTLHIDNLSGKNAHHQAETVFKAFGRALRMAVEHDPRMAGQTPSTKGTLTA.

Belongs to the imidazoleglycerol-phosphate dehydratase family.

The protein resides in the cytoplasm. The catalysed reaction is D-erythro-1-(imidazol-4-yl)glycerol 3-phosphate = 3-(imidazol-4-yl)-2-oxopropyl phosphate + H2O. The protein operates within amino-acid biosynthesis; L-histidine biosynthesis; L-histidine from 5-phospho-alpha-D-ribose 1-diphosphate: step 6/9. The chain is Imidazoleglycerol-phosphate dehydratase from Neisseria meningitidis serogroup C (strain 053442).